The following is a 119-amino-acid chain: Protein TusC (119 aa).

The protein belongs to the DsrF/TusC family. As to quaternary structure, heterohexamer, formed by a dimer of trimers. The hexameric TusBCD complex contains 2 copies each of TusB, TusC and TusD. The TusBCD complex interacts with TusE.

The protein resides in the cytoplasm. Functionally, part of a sulfur-relay system required for 2-thiolation of 5-methylaminomethyl-2-thiouridine (mnm(5)s(2)U) at tRNA wobble positions. This is Protein TusC from Sodalis glossinidius (strain morsitans).